The chain runs to 290 residues: Phosphoribosylaminoimidazole-succinocarboxamide synthase (290 aa).

It belongs to the SAICAR synthetase family.

It carries out the reaction 5-amino-1-(5-phospho-D-ribosyl)imidazole-4-carboxylate + L-aspartate + ATP = (2S)-2-[5-amino-1-(5-phospho-beta-D-ribosyl)imidazole-4-carboxamido]succinate + ADP + phosphate + 2 H(+). Its pathway is purine metabolism; IMP biosynthesis via de novo pathway; 5-amino-1-(5-phospho-D-ribosyl)imidazole-4-carboxamide from 5-amino-1-(5-phospho-D-ribosyl)imidazole-4-carboxylate: step 1/2. The polypeptide is Phosphoribosylaminoimidazole-succinocarboxamide synthase (purC) (Haemophilus influenzae (strain ATCC 51907 / DSM 11121 / KW20 / Rd)).